The following is a 367-amino-acid chain: Voltage-gated potassium channel subunit beta-2 (367 aa).

Phosphoserine is present on residues serine 9, serine 14, and serine 20. Arginine 28 carries the asymmetric dimethylarginine; alternate modification. Arginine 28 carries the post-translational modification Omega-N-methylarginine; alternate. Serine 31 carries the phosphoserine modification. Threonine 56, tryptophan 57, glutamine 63, and aspartate 85 together coordinate NADP(+). Catalysis depends on tyrosine 90, which acts as the Proton donor/acceptor. A Phosphoserine modification is found at serine 112. At lysine 124 the chain carries N6-acetyllysine. 18 residues coordinate NADP(+): asparagine 158, serine 188, arginine 189, glutamine 214, tryptophan 243, serine 244, proline 245, leucine 246, alanine 247, cysteine 248, lysine 254, tyrosine 262, arginine 264, glycine 323, serine 325, glutamine 329, glutamate 332, and asparagine 333.

Belongs to the shaker potassium channel beta subunit family. Homotetramer. Interaction with tetrameric potassium channel alpha subunits gives rise to a heterooctamer. Identified in potassium channel complexes containing KCNA1, KCNA2, KCNA4, KCNA5, KCNA6, KCNAB1, KCNAB2 and KCND3. Interacts (in unphosphorylated form) with MAPRE1. Forms a ternary complex with SQSTM1 and PRKCZ. Post-translationally, phosphorylated by PRKCZ; may be regulated by incorporation in a complex composed of PRKCZ and SQSTM1. As to expression, detected in the juxtaparanodal region of nodes of Ranvier in myelinated nerve fibers in the spinal cord (at protein level).

The protein localises to the cytoplasm. It localises to the membrane. Its subcellular location is the cell membrane. It is found in the cell projection. The protein resides in the axon. The protein localises to the synapse. It localises to the synaptosome. Its subcellular location is the cytoskeleton. It carries out the reaction hydroxyacetone + NADP(+) = methylglyoxal + NADPH + H(+). The catalysed reaction is (E)-4-oxonon-2-en-1-ol + NADP(+) = (E)-4-oxonon-2-enal + NADPH + H(+). In terms of biological role, regulatory subunit of the voltage-gated potassium (Kv) Shaker channels composed of pore-forming and potassium-conducting alpha subunits and of regulatory beta subunits. The beta-2/KCNAB2 cytoplasmic subunit promotes potassium channel closure via a mechanism that does not involve physical obstruction of the channel pore. Promotes the inactivation of Kv1.4/KCNA4 and Kv1.5/KCNA5 alpha subunit-containing channels. Displays nicotinamide adenine dinucleotide phosphate (NADPH)-dependent aldoketoreductase activity by catalyzing the NADPH-dependent reduction of a wide range of aldehyde and ketone substrates. Substrate specificity includes methylglyoxal, 9,10-phenanthrenequinone, prostaglandin J2, 4-nitrobenzaldehyde, 4-nitroacetophenone and 4-oxo-trans-2-nonenal (in vitro, no physiological substrate identified yet). The binding of oxidized and reduced nucleotide alters Kv channel gating and may contribute to dynamic fine tuning of cell excitability. Contributes to the regulation of nerve signaling, and prevents neuronal hyperexcitability. This chain is Voltage-gated potassium channel subunit beta-2 (KCNAB2), found in Bos taurus (Bovine).